We begin with the raw amino-acid sequence, 423 residues long: Kynurenine--oxoglutarate transaminase 1 (423 aa).

Residue Gly36 coordinates substrate. Lys82 carries the N6-succinyllysine modification. A substrate-binding site is contributed by Asn185. At Lys247 the chain carries N6-(pyridoxal phosphate)lysine. Arg398 is a binding site for substrate.

Belongs to the class-I pyridoxal-phosphate-dependent aminotransferase family. As to quaternary structure, homodimer. Pyridoxal 5'-phosphate serves as cofactor. As to expression, detected in kidney.

The protein resides in the cytoplasm. It localises to the cytosol. It is found in the mitochondrion matrix. The enzyme catalyses L-kynurenine + 2-oxoglutarate = kynurenate + L-glutamate + H2O. It catalyses the reaction 3-phenylpyruvate + L-glutamine = 2-oxoglutaramate + L-phenylalanine. It carries out the reaction an S-substituted L-cysteine + H2O = a thiol + pyruvate + NH4(+). The protein operates within amino-acid degradation; L-kynurenine degradation; kynurenate from L-kynurenine: step 1/2. Its activity is regulated as follows. Inhibited by aminooxyacetate (in vitro). Its function is as follows. Catalyzes the irreversible transamination of the L-tryptophan metabolite L-kynurenine to form kynurenic acid (KA), an intermediate in the tryptophan catabolic pathway which is also a broad spectrum antagonist of the three ionotropic excitatory amino acid receptors among others. Metabolizes the cysteine conjugates of certain halogenated alkenes and alkanes to form reactive metabolites. Catalyzes the beta-elimination of S-conjugates and Se-conjugates of L-(seleno)cysteine, resulting in the cleavage of the C-S or C-Se bond. The sequence is that of Kynurenine--oxoglutarate transaminase 1 from Rattus norvegicus (Rat).